The primary structure comprises 185 residues: Inner membrane-spanning protein YciB (185 aa).

5 helical membrane-spanning segments follow: residues 19–39 (LGGVREAAIVLVVATILQIVI), 53–73 (IMASAVVFFGLLTAYFNEIRY), 76–96 (WKVTIINGLFAIVLLIAQFQF), 118–138 (TLNFGWAIFFIICMLVNIYIS), and 149–169 (FKSFGIIGMTVIATIISGVYI).

The protein belongs to the YciB family.

The protein localises to the cell inner membrane. Functionally, plays a role in cell envelope biogenesis, maintenance of cell envelope integrity and membrane homeostasis. This is Inner membrane-spanning protein YciB from Haemophilus influenzae (strain PittEE).